Here is a 412-residue protein sequence, read N- to C-terminus: Serine hydroxymethyltransferase (412 aa).

(6S)-5,6,7,8-tetrahydrofolate is bound by residues leucine 117 and 121–123; that span reads GHL. At lysine 226 the chain carries N6-(pyridoxal phosphate)lysine.

It belongs to the SHMT family. As to quaternary structure, homodimer. Pyridoxal 5'-phosphate serves as cofactor.

Its subcellular location is the cytoplasm. It carries out the reaction (6R)-5,10-methylene-5,6,7,8-tetrahydrofolate + glycine + H2O = (6S)-5,6,7,8-tetrahydrofolate + L-serine. It participates in one-carbon metabolism; tetrahydrofolate interconversion. Its pathway is amino-acid biosynthesis; glycine biosynthesis; glycine from L-serine: step 1/1. Catalyzes the reversible interconversion of serine and glycine with tetrahydrofolate (THF) serving as the one-carbon carrier. This reaction serves as the major source of one-carbon groups required for the biosynthesis of purines, thymidylate, methionine, and other important biomolecules. Also exhibits THF-independent aldolase activity toward beta-hydroxyamino acids, producing glycine and aldehydes, via a retro-aldol mechanism. The chain is Serine hydroxymethyltransferase from Staphylococcus haemolyticus (strain JCSC1435).